A 90-amino-acid polypeptide reads, in one-letter code: Protein RL8A (90 aa).

The chain crosses the membrane as a helical span at residues 15–34; that stretch reads WTCEGLLLLLGLLVLFFHHH. The interval 55–90 is disordered; it reads HESGWYSSDDDGDRDGDEETGESHNRNSVGLSAVFS. Residues 62 to 74 are compositionally biased toward acidic residues; sequence SDDDGDRDGDEET. Polar residues predominate over residues 80-90; that stretch reads RNSVGLSAVFS.

Its subcellular location is the host membrane. The polypeptide is Protein RL8A (RL8A) (Homo sapiens (Human)).